Reading from the N-terminus, the 176-residue chain is Ribosome maturation factor RimM (176 aa).

The PRC barrel domain maps to 96–176; it reads PEDEFYWRDL…QILVDWDPDF (81 aa).

This sequence belongs to the RimM family. In terms of assembly, binds ribosomal protein uS19.

The protein localises to the cytoplasm. Functionally, an accessory protein needed during the final step in the assembly of 30S ribosomal subunit, possibly for assembly of the head region. Essential for efficient processing of 16S rRNA. May be needed both before and after RbfA during the maturation of 16S rRNA. It has affinity for free ribosomal 30S subunits but not for 70S ribosomes. The sequence is that of Ribosome maturation factor RimM from Shewanella woodyi (strain ATCC 51908 / MS32).